Reading from the N-terminus, the 390-residue chain is Chitinase-3-like protein 2 (390 aa).

Positions 1 to 26 (MGATTMDQKSLWAGVVVLLLLQGGSA) are cleaved as a signal peptide. A GH18 domain is found at 27–390 (YKLVCYFTNW…QAVKRSLGSL (364 aa)). An intrachain disulfide couples Cys31 to Cys56. Asn35 is a glycosylation site (N-linked (GlcNAc...) asparagine). Chitin-binding positions include 75–76 (DK), 102–105 (GGYL), Tyr104, Tyr146, 210–213 (LSFD), Asp213, and Trp360.

The protein belongs to the glycosyl hydrolase 18 family. In terms of tissue distribution, highest expression in chondrocytes, followed by synoviocytes, lung and heart. Not detected in spleen, pancreas, and liver. May also be expressed in developing brain and placenta.

It localises to the secreted. Functionally, lectin that binds chitooligosaccharides and other glycans with high affinity, but not heparin. Has no chitinase activity. This chain is Chitinase-3-like protein 2 (CHI3L2), found in Homo sapiens (Human).